We begin with the raw amino-acid sequence, 243 residues long: Adenylate dimethylallyltransferase (243 aa).

The catalysed reaction is dimethylallyl diphosphate + AMP = N(6)-(dimethylallyl)adenosine 5'-phosphate + diphosphate. In terms of biological role, transfers dimethylallyl groups to AMP as part of the biosynthesis of cytokinin phytohormones. The protein is Adenylate dimethylallyltransferase (tzs) of Agrobacterium tumefaciens (strain T37).